The chain runs to 669 residues: Thrombospondin-type laminin G domain and EAR repeat-containing protein (669 aa).

The signal sequence occupies residues 1–19 (MSALLSLCFVLPLAAPGHG). Positions 58 to 277 (GLQLSVAAPR…RVTLGPQPPC (220 aa)) constitute a Laminin G-like domain. EAR repeat units follow at residues 313-358 (DYVE…KWTE), 360-408 (KFVS…KWSH), 412-460 (KFTP…KWNP), 464-506 (LFEA…VHSH), 514-570 (SFQL…ELNV), 574-622 (AFVK…RWQG), and 625-668 (GFVA…RLRT). N320 is a glycosylation site (N-linked (GlcNAc...) asparagine). 4 N-linked (GlcNAc...) asparagine glycosylation sites follow: N468, N497, N556, and N569.

Its subcellular location is the secreted. It localises to the cell surface. The protein resides in the cell projection. It is found in the stereocilium. Functionally, plays a critical role in tooth and hair follicle morphogenesis through regulation of the Notch signaling pathway. May play a role in development or function of the auditory system. This Homo sapiens (Human) protein is Thrombospondin-type laminin G domain and EAR repeat-containing protein (TSPEAR).